The primary structure comprises 419 residues: UDP-N-acetylglucosamine 1-carboxyvinyltransferase 2 (419 aa).

Residue K24–N25 coordinates phosphoenolpyruvate. R94 lines the UDP-N-acetyl-alpha-D-glucosamine pocket. Catalysis depends on C118, which acts as the Proton donor. Residue C118 is modified to 2-(S-cysteinyl)pyruvic acid O-phosphothioketal. UDP-N-acetyl-alpha-D-glucosamine contacts are provided by residues R123–Q127, D307, and I329.

This sequence belongs to the EPSP synthase family. MurA subfamily.

It localises to the cytoplasm. The catalysed reaction is phosphoenolpyruvate + UDP-N-acetyl-alpha-D-glucosamine = UDP-N-acetyl-3-O-(1-carboxyvinyl)-alpha-D-glucosamine + phosphate. It functions in the pathway cell wall biogenesis; peptidoglycan biosynthesis. Functionally, cell wall formation. Adds enolpyruvyl to UDP-N-acetylglucosamine. The polypeptide is UDP-N-acetylglucosamine 1-carboxyvinyltransferase 2 (Staphylococcus aureus (strain bovine RF122 / ET3-1)).